The sequence spans 242 residues: uncharacterized protein (242 aa).

The 69-residue stretch at 17–85 (QRVDERIATT…HGSGSVVRDP (69 aa)) folds into the HTH gntR-type domain. The segment at residues 45 to 64 (ERDLAERLGVNRTSLRQGLA) is a DNA-binding region (H-T-H motif).

This is an uncharacterized protein from Mycobacterium tuberculosis (strain ATCC 25618 / H37Rv).